The sequence spans 430 residues: Adenylosuccinate synthetase (430 aa).

GTP-binding positions include 17–23 (GDEGKGK) and 45–47 (GHT). The Proton acceptor role is filled by D18. 2 residues coordinate Mg(2+): D18 and G45. Residues 18–21 (DEGK), 43–46 (NAGH), T139, R153, N229, T244, and R308 each bind IMP. H46 serves as the catalytic Proton donor. 304 to 310 (TVTGRRR) contributes to the substrate binding site. GTP-binding positions include R310, 336 to 338 (KLD), and 418 to 420 (GVG).

It belongs to the adenylosuccinate synthetase family. As to quaternary structure, homodimer. The cofactor is Mg(2+).

Its subcellular location is the cytoplasm. It catalyses the reaction IMP + L-aspartate + GTP = N(6)-(1,2-dicarboxyethyl)-AMP + GDP + phosphate + 2 H(+). It functions in the pathway purine metabolism; AMP biosynthesis via de novo pathway; AMP from IMP: step 1/2. Plays an important role in the de novo pathway and in the salvage pathway of purine nucleotide biosynthesis. Catalyzes the first committed step in the biosynthesis of AMP from IMP. The protein is Adenylosuccinate synthetase of Cryptococcus neoformans var. neoformans serotype D (strain B-3501A) (Filobasidiella neoformans).